A 135-amino-acid chain; its full sequence is ATP synthase epsilon chain (135 aa).

The protein belongs to the ATPase epsilon chain family. As to quaternary structure, F-type ATPases have 2 components, CF(1) - the catalytic core - and CF(0) - the membrane proton channel. CF(1) has five subunits: alpha(3), beta(3), gamma(1), delta(1), epsilon(1). CF(0) has three main subunits: a, b and c.

It localises to the cellular thylakoid membrane. Produces ATP from ADP in the presence of a proton gradient across the membrane. The polypeptide is ATP synthase epsilon chain (Prochlorococcus marinus (strain MIT 9211)).